A 340-amino-acid chain; its full sequence is Fructoselysine 6-phosphate deglycase (340 aa).

SIS domains are found at residues 35-169 (IVEE…RLAP) and 201-331 (LGEL…PDER).

Homododecamer.

It carries out the reaction N(6)-(6-phospho-D-fructosyl)-L-lysine + H2O = D-glucose 6-phosphate + L-lysine. It functions in the pathway carbohydrate metabolism; fructoselysine degradation; D-glucose 6-phosphate and lysine from fructoselysine: step 2/2. Its activity is regulated as follows. Strongly inhibited by ZnCl(2). Functionally, catalyzes the reversible conversion of fructoselysine 6-phosphate to glucose 6-phosphate and lysine. Functions in a fructoselysine degradation pathway that allows E.coli to grow on fructoselysine or psicoselysine. In Escherichia coli (strain K12), this protein is Fructoselysine 6-phosphate deglycase.